A 244-amino-acid chain; its full sequence is Phosphoribosylaminoimidazole-succinocarboxamide synthase (244 aa).

The protein belongs to the SAICAR synthetase family.

The catalysed reaction is 5-amino-1-(5-phospho-D-ribosyl)imidazole-4-carboxylate + L-aspartate + ATP = (2S)-2-[5-amino-1-(5-phospho-beta-D-ribosyl)imidazole-4-carboxamido]succinate + ADP + phosphate + 2 H(+). Its pathway is purine metabolism; IMP biosynthesis via de novo pathway; 5-amino-1-(5-phospho-D-ribosyl)imidazole-4-carboxamide from 5-amino-1-(5-phospho-D-ribosyl)imidazole-4-carboxylate: step 1/2. In Prochlorococcus marinus (strain SARG / CCMP1375 / SS120), this protein is Phosphoribosylaminoimidazole-succinocarboxamide synthase.